The primary structure comprises 331 residues: Ferredoxin--NADP reductase (331 aa).

Residues T14, E33, Q41, Y46, V86, F120, D284, and S327 each coordinate FAD.

Belongs to the ferredoxin--NADP reductase type 2 family. As to quaternary structure, homodimer. The cofactor is FAD.

The enzyme catalyses 2 reduced [2Fe-2S]-[ferredoxin] + NADP(+) + H(+) = 2 oxidized [2Fe-2S]-[ferredoxin] + NADPH. This chain is Ferredoxin--NADP reductase, found in Picrophilus torridus (strain ATCC 700027 / DSM 9790 / JCM 10055 / NBRC 100828 / KAW 2/3).